A 474-amino-acid polypeptide reads, in one-letter code: uncharacterized protein (474 aa).

The segment covering Met1–Leu11 has biased composition (acidic residues). The interval Met1 to Gly163 is disordered. Basic and acidic residues predominate over residues Phe12–Glu25. The span at Ala27 to Thr39 shows a compositional bias: polar residues. Over residues Lys40–Gly76 the composition is skewed to basic and acidic residues. A compositionally biased stretch (polar residues) spans Asn129 to Thr140. 2 consecutive RRM domains span residues Gly163–Lys245 and Ala247–Pro324. Residues Asp412–Arg474 form a disordered region. Positions Pro425 to Ser434 are enriched in low complexity. Positions Ser435 to Pro444 are enriched in gly residues.

It is found in the nucleus. This is an uncharacterized protein from Schizosaccharomyces pombe (strain 972 / ATCC 24843) (Fission yeast).